The chain runs to 84 residues: Esculentin-1ISb (84 aa).

A signal peptide spans 1 to 22 (MFTLKKPLLLIVLLGIISLSLC). Positions 23–36 (EQERAADEDEGTKI) are cleaved as a propeptide — removed in mature form. Cys-78 and Cys-84 form a disulfide bridge.

In terms of tissue distribution, expressed by the skin glands.

The protein resides in the secreted. Has antimicrobial activity against Gram-negative bacterium E.coli ATCC 8739 (MIC=3.1 ug), against Gram positive bacteria S.aureus ATCC 6538 (MIC=3.1 ug), methicillin-resistant S.aureus ATCC 43300 (MIC=12.5 ug), B.subtilis ATCC 6633 (MIC=12.5 ug) and against fungus C.albicans ATCC 90028 (MIC=50 ug). The protein is Esculentin-1ISb of Odorrana ishikawae (Ishikawa's frog).